The primary structure comprises 489 residues: Inositol-pentakisphosphate 2-kinase (489 aa).

Positions 136–140 (EIKPK) match the EXKPK motif motif.

This sequence belongs to the IPK1 type 2 family.

It localises to the cytoplasm. It is found in the nucleus. The catalysed reaction is 1D-myo-inositol 1,3,4,5,6-pentakisphosphate + ATP = 1D-myo-inositol hexakisphosphate + ADP + H(+). Functionally, phosphorylates Ins(1,3,4,5,6)P5 at position 2 to form Ins(1,2,3,4,5,6)P6 (InsP6 or phytate). InsP6 is involved in many processes such as mRNA export, non-homologous end-joining, endocytosis, ion channel regulation. It also protects cells from TNF-alpha-induced apoptosis. In Rattus norvegicus (Rat), this protein is Inositol-pentakisphosphate 2-kinase (Ippk).